Here is a 443-residue protein sequence, read N- to C-terminus: Phosphomevalonate kinase ERG8 (443 aa).

160–170 (ANKTGLGSSAA) lines the ATP pocket.

The protein belongs to the GHMP kinase family. Mevalonate kinase subfamily.

It carries out the reaction (R)-5-phosphomevalonate + ATP = (R)-5-diphosphomevalonate + ADP. Its pathway is isoprenoid biosynthesis; isopentenyl diphosphate biosynthesis via mevalonate pathway; isopentenyl diphosphate from (R)-mevalonate: step 2/3. Phosphomevalonate kinase; part of the second module of ergosterol biosynthesis pathway that includes the middle steps of the pathway. ERG8 converts 5-phosphomevalonate to 5-diphosphomevalonate. The second module is carried out in the vacuole and involves the formation of farnesyl diphosphate, which is also an important intermediate in the biosynthesis of ubiquinone, dolichol, heme and prenylated proteins. Activity by the mevalonate kinase ERG12 (FG05912) first converts mevalonate into 5-phosphomevalonate. 5-phosphomevalonate is then further converted to 5-diphosphomevalonate by the phosphomevalonate kinase ERG8 (FG09764). The diphosphomevalonate decarboxylase ERG19 (FG10424) then produces isopentenyl diphosphate. The isopentenyl-diphosphate delta-isomerase IDI1 (FG09722) then catalyzes the 1,3-allylic rearrangement of the homoallylic substrate isopentenyl (IPP) to its highly electrophilic allylic isomer, dimethylallyl diphosphate (DMAPP). Finally the farnesyl diphosphate synthase ERG20 (FG06784) catalyzes the sequential condensation of isopentenyl pyrophosphate with dimethylallyl pyrophosphate, and then with the resultant geranylpyrophosphate to the ultimate product farnesyl pyrophosphate. The protein is Phosphomevalonate kinase ERG8 of Gibberella zeae (strain ATCC MYA-4620 / CBS 123657 / FGSC 9075 / NRRL 31084 / PH-1) (Wheat head blight fungus).